The following is a 288-amino-acid chain: Proteasome assembly chaperone 1 (288 aa).

N-acetylalanine is present on Ala-2. The interval 12 to 38 (TPCRAGTEEEEEEEDGNRETPEDREVR) is disordered. Thr-18 carries the phosphothreonine modification. The span at 28–38 (NRETPEDREVR) shows a compositional bias: basic and acidic residues. Thr-54 is subject to Phosphothreonine. Ser-180 is modified (phosphoserine). The residue at position 264 (Lys-264) is an N6-acetyllysine.

The protein belongs to the PSMG1 family. In terms of assembly, forms a heterodimer with PSMG2. The PSMG1-PSMG2 heterodimer interacts directly with the PSMA5 and PSMA7 proteasome alpha subunits. In terms of processing, degraded by the proteasome upon completion of 20S proteasome maturation.

It localises to the cytoplasm. Its subcellular location is the endoplasmic reticulum. Functionally, chaperone protein which promotes assembly of the 20S proteasome as part of a heterodimer with PSMG2. The PSMG1-PSMG2 heterodimer binds to the PSMA5 and PSMA7 proteasome subunits, promotes assembly of the proteasome alpha subunits into the heteroheptameric alpha ring and prevents alpha ring dimerization. This is Proteasome assembly chaperone 1 from Bos taurus (Bovine).